Here is an 81-residue protein sequence, read N- to C-terminus: Acyl carrier protein (81 aa).

Residues 2–80 enclose the Carrier domain; the sequence is ASEQEILSGL…DAVAYISQAQ (79 aa). Serine 40 carries the post-translational modification O-(pantetheine 4'-phosphoryl)serine.

It belongs to the acyl carrier protein (ACP) family. In terms of processing, 4'-phosphopantetheine is transferred from CoA to a specific serine of apo-ACP by AcpS. This modification is essential for activity because fatty acids are bound in thioester linkage to the sulfhydryl of the prosthetic group.

Its subcellular location is the cytoplasm. The protein operates within lipid metabolism; fatty acid biosynthesis. In terms of biological role, carrier of the growing fatty acid chain in fatty acid biosynthesis. This Kineococcus radiotolerans (strain ATCC BAA-149 / DSM 14245 / SRS30216) protein is Acyl carrier protein.